Reading from the N-terminus, the 142-residue chain is MIHMKQLTSKEEWAESYPIMSELRTELDIETYLQRLEACVQKESYMLFALYENTAIRALCGALPRVSIHKGEHLWIADLVTTAPCRSKGYGKMLLDYASDWARKAGLGFVSLSSGLQRKDAHRFYTDKMGFTIESYLFRKPV.

The N-acetyltransferase domain occupies Ile-2–Val-142.

The protein belongs to the acetyltransferase family.

This is an uncharacterized protein from Bacillus subtilis (strain 168).